The chain runs to 311 residues: Ribosomal protein L11 methyltransferase (311 aa).

S-adenosyl-L-methionine contacts are provided by Thr162, Gly183, Asp205, and Asn248.

This sequence belongs to the methyltransferase superfamily. PrmA family.

It localises to the cytoplasm. It carries out the reaction L-lysyl-[protein] + 3 S-adenosyl-L-methionine = N(6),N(6),N(6)-trimethyl-L-lysyl-[protein] + 3 S-adenosyl-L-homocysteine + 3 H(+). Methylates ribosomal protein L11. The chain is Ribosomal protein L11 methyltransferase from Bacillus subtilis (strain 168).